The following is a 159-amino-acid chain: 2-C-methyl-D-erythritol 2,4-cyclodiphosphate synthase (159 aa).

D9 and H11 together coordinate a divalent metal cation. 4-CDP-2-C-methyl-D-erythritol 2-phosphate is bound by residues 9–11 and 35–36; these read DVH and HS. An a divalent metal cation-binding site is contributed by H43. 4-CDP-2-C-methyl-D-erythritol 2-phosphate is bound by residues 57–59, 62–66, 133–136, F140, and R143; these read DLG, FPDTD, and TTTE.

This sequence belongs to the IspF family. Homotrimer. The cofactor is a divalent metal cation.

It carries out the reaction 4-CDP-2-C-methyl-D-erythritol 2-phosphate = 2-C-methyl-D-erythritol 2,4-cyclic diphosphate + CMP. The protein operates within isoprenoid biosynthesis; isopentenyl diphosphate biosynthesis via DXP pathway; isopentenyl diphosphate from 1-deoxy-D-xylulose 5-phosphate: step 4/6. Functionally, involved in the biosynthesis of isopentenyl diphosphate (IPP) and dimethylallyl diphosphate (DMAPP), two major building blocks of isoprenoid compounds. Catalyzes the conversion of 4-diphosphocytidyl-2-C-methyl-D-erythritol 2-phosphate (CDP-ME2P) to 2-C-methyl-D-erythritol 2,4-cyclodiphosphate (ME-CPP) with a corresponding release of cytidine 5-monophosphate (CMP). The chain is 2-C-methyl-D-erythritol 2,4-cyclodiphosphate synthase from Shouchella clausii (strain KSM-K16) (Alkalihalobacillus clausii).